Reading from the N-terminus, the 290-residue chain is MDTTTTMAPLPLLTTTSLLLFFFLASSFAADVVVAGGGGGGGGYDGGGDGEGGGGGDGEGGGGGGGAKMPHVNHGRYKCGPWVDGHATFYGGRDASGTTEGGACGYKDADGYGAMTAAVSPALFDNGAGCGACYELKGDSGKTVVVTATNQAPPPVNGMKGEHFDLTMPAFLSIAEEKLGVVPVSYRKVACVRQGGIKYTITGNPSYNMVMVKNVGGAGDVVKLTVKGTKRVKWTPLQRSWGQLWKTEANLTGESLTFRVMTGDHRKATSWRVAPRDWTYDNTYQAKKNF.

A signal peptide spans M1–A29. The interval D45–A67 is disordered. An Expansin-like EG45 domain is found at G101–G196. Residues S206–A286 enclose the Expansin-like CBD domain. N250 carries N-linked (GlcNAc...) asparagine glycosylation.

Belongs to the expansin family. Expansin A subfamily. As to expression, expressed in flowers.

Its subcellular location is the secreted. It localises to the cell wall. The protein resides in the membrane. Its function is as follows. May cause loosening and extension of plant cell walls by disrupting non-covalent bonding between cellulose microfibrils and matrix glucans. No enzymatic activity has been found. May be required for rapid internodal elongation in deepwater rice during submergence. This Oryza sativa subsp. japonica (Rice) protein is Expansin-A26 (EXPA26).